A 335-amino-acid polypeptide reads, in one-letter code: Syntaxin-18 (335 aa).

At M1–N309 the chain is on the cytoplasmic side. A compositionally biased stretch (basic and acidic residues) spans K168–L208. The disordered stretch occupies residues K168–E226. Positions I243 to A305 constitute a t-SNARE coiled-coil homology domain. A helical; Anchor for type IV membrane protein membrane pass occupies residues A310–L330. The Vesicular segment spans residues D331–S335.

The protein belongs to the syntaxin family. In terms of assembly, component of a SNARE complex consisting of STX18, USE1L, BNIP1/SEC20L, and SEC22B. RINT1/TIP20L and ZW10 are associated with the complex through interaction with BNIP1/SEC20L. Interacts directly with USE1L and BNIP1/SEC20L.

The protein resides in the endoplasmic reticulum membrane. It is found in the golgi apparatus membrane. Functionally, syntaxin that may be involved in targeting and fusion of Golgi-derived retrograde transport vesicles with the ER. In Pongo abelii (Sumatran orangutan), this protein is Syntaxin-18 (STX18).